Reading from the N-terminus, the 270-residue chain is MFGLKVKDATVDSSKQSTESLKGEESSSSSTTSSTSTTQRGGSSGDTKVKALQVAVKKKSDSEDNGQIELETNNLANAPIKRGSNNNQQVQLKADDFGTSPSSSESGQSGTPTPWTPWLATEQIHKDLPKWSASILILYDAPYARNRTAIDRVDHLDPKVMTANYPPSWRTPKWNHHGLWDWKARDVLVQTTGFFNPRRHPDWFDQGQAVAENTQTGFDTDDTDNKKQGFRKQGEQSPAPIALPFEAYFANIGNLTWFGQALLVFGICLS.

A compositionally biased stretch (basic and acidic residues) spans 1–10; sequence MFGLKVKDAT. 2 disordered regions span residues 1–115 and 215–236; these read MFGL…PTPW and QTGF…QGEQ. Low complexity-rich tracts occupy residues 26–41 and 98–113; these read SSSS…TQRG and GTSP…GTPT.

The protein belongs to the adhesin P1 family.

This is an uncharacterized protein from Mycoplasma pneumoniae (strain ATCC 29342 / M129 / Subtype 1) (Mycoplasmoides pneumoniae).